The chain runs to 140 residues: ATP synthase epsilon chain 1 (140 aa).

This sequence belongs to the ATPase epsilon chain family. In terms of assembly, F-type ATPases have 2 components, CF(1) - the catalytic core - and CF(0) - the membrane proton channel. CF(1) has five subunits: alpha(3), beta(3), gamma(1), delta(1), epsilon(1). CF(0) has three main subunits: a, b and c.

The protein resides in the cell inner membrane. In terms of biological role, produces ATP from ADP in the presence of a proton gradient across the membrane. In Methylococcus capsulatus (strain ATCC 33009 / NCIMB 11132 / Bath), this protein is ATP synthase epsilon chain 1.